The following is a 583-amino-acid chain: Ribonuclease ZC3H12A (583 aa).

Residues 1 to 11 are compositionally biased toward basic and acidic residues; the sequence is MSLWELEDRRS. 2 disordered regions span residues 1–29 and 73–119; these read MSLW…EATT and GSAA…GSDL. The span at 15–29 shows a compositional bias: low complexity; that stretch reads TPRPAQEPTAEEATT. The tract at residues 26–71 is ubiquitin association domain; the sequence is EATTAELQMKVDFFRKLGYSSAEIHSVLQKLGIQADTNTVLGELVK. The necessary for interaction with TANK stretch occupies residues 65 to 134; it reads VLGELVKHGS…DGSNVAMSHG (70 aa). The span at 73–82 shows a compositional bias: basic and acidic residues; sequence GSAAERERQA. The residue at position 83 (Ser83) is a Phosphoserine. The segment at 96-281 is RNase; it reads GGGTPKAPTV…LDNFLRKKPL (186 aa). Residues 119–274 form the RNase NYN domain; that stretch reads LRPIVIDGSN…LGRHGPSLDN (156 aa). The tract at residues 198–204 is RNA binding; that stretch reads RRVGGKR. Asp210 provides a ligand contact to Mg(2+). Disordered regions lie at residues 262-290 and 323-404; these read DDPL…KQPC and ANAL…PSEW. Residues 284-309 form a C3H1-type zinc finger; that stretch reads EHKKQPCPYGRKCTYGIKCRFLHPER. The interval 285–441 is necessary for interaction with ZC3H12D; that stretch reads HKKQPCPYGR…SELWGVRGGG (157 aa). Residues 341-352 are compositionally biased toward low complexity; the sequence is RPSPSSQPGSLP. The span at 353-364 shows a compositional bias: basic and acidic residues; the sequence is TEHEQCSPDRKK. A compositionally biased stretch (low complexity) spans 384–393; that stretch reads PTGRSLPPSG. A phosphoserine mark is found at Ser422 and Ser426. Positions 503–530 are disordered; sequence YQLPPPTQRLQEPQAPGPGADRGPWGGA.

This sequence belongs to the ZC3H12 family. As to quaternary structure, oligomer. Found in a deubiquitination complex with TANK, USP10 and ZC3H12A; this complex inhibits genotoxic stress- or interleukin-1-beta-mediated NF-kappaB activation by promoting IKBKG or TRAF6 deubiquitination. Interacts with IKBKG; this interaction increases in response to DNA damage. Interacts with TANK; this interaction increases in response to DNA damage and serves as a bridge to anchor both TANK and USP10 into a deubiquitinating complex. Interacts with TRAF6; this interaction increases in response to DNA damage and is stimulated by TANK. Interacts with USP10; this interaction increases in response to DNA damage and serves as a bridge to anchor both TANK and USP10 into a deubiquitinating complex. Interacts with ZC3H12D. Interacts with TNRC6A. Interacts with IKBKB/IKKB. Interacts with IKBKB/IKKB. Interacts with BTRC; the interaction occurs when ZC3H12A is phosphorylated in a IKBKB/IKKB-dependent manner. Interacts with IRAK1; this interaction increases the interaction between ZC3H12A and IKBKB/IKKB. Interacts with UPF1; this interaction occurs in a mRNA translationally active- and termination-dependent manner and is essential for ZC3H12A-mediated degradation of target mRNAs. Associates with ribosomes. Interacts with ubiquitin. Requires Mg(2+) as cofactor. Phosphorylated by IRAK1; phosphorylation is necessary for subsequent phosphorylation by the I-kappa-B-kinase (IKK) complex. Phosphorylated by I-kappa-B-kinase (IKK) subunits IKBKB/IKKB and CHUK/IKKA at Ser-422 and Ser-426; these phosphorylations promote ubiquitin proteasome-mediated degradation of ZC3H12A and hence facilitates rapid and robust production of IL-6 mRNA in response to toll-like receptor (TLR) or IL-1 receptor stimuli. Post-translationally, ubiquitinated; ubiquitination is induced in response to interleukin IL1 receptor stimuli in a IKBKB/IKKB and IRAK1-dependent manner, leading to proteasome-mediated degradation. In terms of processing, proteolytically cleaved between Arg-95 and Arg-198 by MALT1 in activated T-cells; cleavage at Arg-95 is critical for promoting ZC3H12A degradation in response to T-cell receptor (TCR) stimulation, and hence is necessary for prolonging the stability of a set of mRNAs controlling T-cell activation and Th17 cell differentiation.

Its subcellular location is the nucleus. The protein resides in the cytoplasm. It localises to the P-body. The protein localises to the rough endoplasmic reticulum membrane. It is found in the cytoplasmic granule. Functionally, endoribonuclease involved in various biological functions such as cellular inflammatory response and immune homeostasis, glial differentiation of neuroprogenitor cells, cell death of cardiomyocytes, adipogenesis and angiogenesis. Functions as an endoribonuclease involved in mRNA decay. Modulates the inflammatory response by promoting the degradation of a set of translationally active cytokine-induced inflammation-related mRNAs, such as IL6 and IL12B, during the early phase of inflammation. Prevents aberrant T-cell-mediated immune reaction by degradation of multiple mRNAs controlling T-cell activation, such as those encoding cytokines (IL6 and IL2), cell surface receptors (ICOS, TNFRSF4 and TNFR2) and transcription factor (REL). Inhibits cooperatively with ZC3H12A the differentiation of helper T cells Th17 in lungs. They repress target mRNA encoding the Th17 cell-promoting factors IL6, ICOS, REL, IRF4, NFKBID and NFKBIZ. The cooperation requires RNA-binding by RC3H1 and the nuclease activity of ZC3H12A. Together with RC3H1, destabilizes TNFRSF4/OX40 mRNA by binding to the conserved stem loop structure in its 3'UTR. Self regulates by destabilizing its own mRNA. Cleaves mRNA harboring a stem-loop (SL), often located in their 3'-UTRs, during the early phase of inflammation in a helicase UPF1-dependent manner. Plays a role in the inhibition of microRNAs (miRNAs) biogenesis. Cleaves the terminal loop of a set of precursor miRNAs (pre-miRNAs) important for the regulation of the inflammatory response leading to their degradation, and thus preventing the biosynthesis of mature miRNAs. Also plays a role in promoting angiogenesis in response to inflammatory cytokines by inhibiting the production of antiangiogenic microRNAs via its anti-dicer RNase activity. Affects the overall ubiquitination of cellular proteins. Positively regulates deubiquitinase activity promoting the cleavage at 'Lys-48'- and 'Lys-63'-linked polyubiquitin chains on TNF receptor-associated factors (TRAFs), preventing JNK and NF-kappa-B signaling pathway activation, and hence negatively regulating macrophage-mediated inflammatory response and immune homeostasis. Also induces deubiquitination of the transcription factor HIF1A, probably leading to its stabilization and nuclear import, thereby positively regulating the expression of proangiogenic HIF1A-targeted genes. Involved in a TANK-dependent negative feedback response to attenuate NF-kappaB activation through the deubiquitination of IKBKG or TRAF6 in response to interleukin-1-beta (IL1B) stimulation or upon DNA damage. Prevents stress granules (SGs) formation and promotes macrophage apoptosis under stress conditions, including arsenite-induced oxidative stress, heat shock, and energy deprivation. Plays a role in the regulation of macrophage polarization; promotes IL4-induced polarization of macrophages M1 into anti-inflammatory M2 state. May also act as a transcription factor that regulates the expression of multiple genes involved in inflammatory response, angiogenesis, adipogenesis and apoptosis. Functions as a positive regulator of glial differentiation of neuroprogenitor cells through an amyloid precursor protein (APP)-dependent signaling pathway. Attenuates septic myocardial contractile dysfunction in response to lipopolysaccharide (LPS) by reducing I-kappa-B-kinase (IKK)-mediated NF-kappa-B activation, and hence myocardial pro-inflammatory cytokine production. In Bos taurus (Bovine), this protein is Ribonuclease ZC3H12A.